Reading from the N-terminus, the 132-residue chain is Fatty acid-binding protein, intestinal (132 aa).

Ala-2 carries the post-translational modification N-acetylalanine. Positions 83 and 107 each coordinate hexadecanoate. Tetradecanoate-binding residues include Trp-83 and Arg-107.

It belongs to the calycin superfamily. Fatty-acid binding protein (FABP) family. As to expression, expressed in the small intestine and at much lower levels in the large intestine. Highest expression levels in the jejunum.

The protein resides in the cytoplasm. Its function is as follows. FABPs are thought to play a role in the intracellular transport of long-chain fatty acids and their acyl-CoA esters. FABP2 is probably involved in triglyceride-rich lipoprotein synthesis. Binds saturated long-chain fatty acids with a high affinity, but binds with a lower affinity to unsaturated long-chain fatty acids. FABP2 may also help maintain energy homeostasis by functioning as a lipid sensor. This is Fatty acid-binding protein, intestinal (FABP2) from Homo sapiens (Human).